We begin with the raw amino-acid sequence, 363 residues long: MPPTPCSLCHTARALVKRPKTGQQVCKDCFFEVFETEVHNTIVEGEGIFKRGERVAIGASGGKDSTVLAHVLSVLNKRYDYGLDLYLLSIDEGITGYRDDSLETVKQNQAEYGLPLKILSYSELYGWTMDKIVEQVGKKNNCTFCGVFRRQALDRGAAQLGVDHIVTGHNADDIAETVLMNIMRGDIARLARCTAVTTQSEDTIKRSKPFKYAYEKEIVMYAYFKKLTYFSTECIYSPDAYRGHARVFLKDLEAVRPSAIVDIIHSGESFVLEQSVQRGMKALQTCLRCGYISSNDLCKACALLEGLESGLSRSALRQTQESTSAAPEGHRTIPMFERYASLNGTPRTPPTPAEPVEGIERAA.

The disordered stretch occupies residues 340-363 (ASLNGTPRTPPTPAEPVEGIERAA).

The protein belongs to the TtcA family. CTU1/NCS6/ATPBD3 subfamily.

The protein localises to the cytoplasm. Its pathway is tRNA modification; 5-methoxycarbonylmethyl-2-thiouridine-tRNA biosynthesis. In terms of biological role, plays a central role in 2-thiolation of mcm(5)S(2)U at tRNA wobble positions of tRNA(Lys), tRNA(Glu) and tRNA(Gln). Directly binds tRNAs and probably acts by catalyzing adenylation of tRNAs, an intermediate required for 2-thiolation. It is unclear whether it acts as a sulfurtransferase that transfers sulfur from thiocarboxylated URM1 onto the uridine of tRNAs at wobble position. Prior mcm(5) tRNA modification by the elongator complex is required for 2-thiolation. May also be involved in protein urmylation. This chain is Cytoplasmic tRNA 2-thiolation protein 1, found in Cryptococcus neoformans var. neoformans serotype D (strain B-3501A) (Filobasidiella neoformans).